The chain runs to 436 residues: KICSTOR complex protein kaptin (436 aa).

Met-1 carries the N-acetylmethionine modification.

Part of the KICSTOR complex composed of KPTN, ITFG2, KICS2 and SZT2. SZT2 probably serves as a link between the other three proteins in the KICSTOR complex and mediates the direct interaction with the GATOR1 complex. May associate with F-actin filaments.

The protein resides in the lysosome membrane. Its subcellular location is the cell projection. The protein localises to the lamellipodium. It is found in the stereocilium. Its function is as follows. As part of the KICSTOR complex functions in the amino acid-sensing branch of the TORC1 signaling pathway. Recruits, in an amino acid-independent manner, the GATOR1 complex to the lysosomal membranes and allows its interaction with GATOR2 and the RAG GTPases. Functions upstream of the RAG GTPases and is required to negatively regulate mTORC1 signaling in absence of amino acids. In absence of the KICSTOR complex mTORC1 is constitutively localized to the lysosome and activated. The KICSTOR complex is also probably involved in the regulation of mTORC1 by glucose. This chain is KICSTOR complex protein kaptin, found in Homo sapiens (Human).